The sequence spans 394 residues: Penicillopepsin-2 (394 aa).

The first 20 residues, 1–20 (MVVFSKITVVLAGLATVASA), serve as a signal peptide directing secretion. A propeptide spans 21–71 (VPTGTSRKSTFTVNQKARPVAQAKAINLPGMYASALSKYGAAVPASVKAAA) (activation peptide). The region spanning 87–391 (YLTPVNVGGT…DANGPRLGFA (305 aa)) is the Peptidase A1 domain. Asp-103 is a catalytic residue. N-linked (GlcNAc...) asparagine glycosylation is present at Asn-132. Residue Asp-283 is part of the active site. The cysteines at positions 319 and 354 are disulfide-linked.

It belongs to the peptidase A1 family. Monomer.

It localises to the secreted. The enzyme catalyses Hydrolysis of proteins with broad specificity similar to that of pepsin A, preferring hydrophobic residues at P1 and P1', but also cleaving 20-Gly-|-Glu-21 in the B chain of insulin. Clots milk, and activates trypsinogen.. Its function is as follows. Secreted aspartic endopeptidase that allows assimilation of proteinaceous substrates. The scissile peptide bond is attacked by a nucleophilic water molecule activated by two aspartic residues in the active site. Shows a broad primary substrate specificity. Favors hydrophobic residues at the P1 and P1' positions, but can also activate trypsinogen and hydrolyze the B chain of insulin between positions 'Gly-20' and 'Glu-21'. The chain is Penicillopepsin-2 from Penicillium janthinellum (Penicillium vitale).